The chain runs to 395 residues: Cysteine synthase 2 (395 aa).

The chain crosses the membrane as a helical span at residues 6 to 22; the sequence is QDLASGIAMGAVFMYLL. K83 carries the N6-(pyridoxal phosphate)lysine modification. Residues 228 to 232 and S335 contribute to the pyridoxal 5'-phosphate site; that span reads GTGGT.

It belongs to the cysteine synthase/cystathionine beta-synthase family. Pyridoxal 5'-phosphate is required as a cofactor.

The protein localises to the mitochondrion. Its subcellular location is the mitochondrion outer membrane. It catalyses the reaction O-acetyl-L-serine + hydrogen sulfide = L-cysteine + acetate. Putative cysteine synthase that catalyzes the conversion of O-acetyl-L-serine (OAS) into cysteine, the last step in the cysteine biosynthesis pathway. However, in contrast to cysteine synthase cys11, this CS-like protein seems not to function in cysteine biosynthesis, at least under normal growth conditions, although the transcript is produced. This chain is Cysteine synthase 2 (cys12), found in Schizosaccharomyces pombe (strain 972 / ATCC 24843) (Fission yeast).